A 94-amino-acid polypeptide reads, in one-letter code: Large ribosomal subunit protein bL25 (94 aa).

Belongs to the bacterial ribosomal protein bL25 family. Part of the 50S ribosomal subunit; part of the 5S rRNA/L5/L18/L25 subcomplex. Contacts the 5S rRNA. Binds to the 5S rRNA independently of L5 and L18.

This is one of the proteins that binds to the 5S RNA in the ribosome where it forms part of the central protuberance. The chain is Large ribosomal subunit protein bL25 from Yersinia pestis bv. Antiqua (strain Antiqua).